Here is a 783-residue protein sequence, read N- to C-terminus: Outer membrane usher protein FanD (783 aa).

An N-terminal signal peptide occupies residues 1 to 23; the sequence is MNRKKHQILKILLLCLISSKSSA. An intrachain disulfide couples cysteine 763 to cysteine 782.

This sequence belongs to the fimbrial export usher family.

The protein localises to the cell outer membrane. Its function is as follows. Involved in the export and assembly of K99 fimbrial subunits across the outer membrane. This chain is Outer membrane usher protein FanD (fanD), found in Escherichia coli.